The chain runs to 224 residues: Ribulose-phosphate 3-epimerase (224 aa).

Serine 8 is a binding site for substrate. Residues histidine 31, aspartate 33, and histidine 64 each coordinate a divalent metal cation. Aspartate 33 serves as the catalytic Proton acceptor. Substrate is bound by residues histidine 64, 140–143 (GFGG), 173–175 (DGG), and 195–196 (GS). Residue aspartate 173 participates in a divalent metal cation binding. The active-site Proton donor is aspartate 173.

The protein belongs to the ribulose-phosphate 3-epimerase family. A divalent metal cation serves as cofactor.

It catalyses the reaction D-ribulose 5-phosphate = D-xylulose 5-phosphate. Its pathway is carbohydrate degradation. Its function is as follows. Catalyzes the reversible epimerization of D-ribulose 5-phosphate to D-xylulose 5-phosphate. The chain is Ribulose-phosphate 3-epimerase from Mycobacterium leprae (strain TN).